The primary structure comprises 699 residues: Glutamine--fructose-6-phosphate aminotransferase [isomerizing] (699 aa).

C2 (nucleophile) is an active-site residue. The Glutamine amidotransferase type-2 domain maps to 2–303 (CGIFGYANFS…DNDIVHISNG (302 aa)). 2 SIS domains span residues 377-516 (HVSG…QNLV) and 544-689 (SVKS…ADFP).

It catalyses the reaction D-fructose 6-phosphate + L-glutamine = D-glucosamine 6-phosphate + L-glutamate. The protein operates within nucleotide-sugar biosynthesis; UDP-N-acetyl-alpha-D-glucosamine biosynthesis; alpha-D-glucosamine 6-phosphate from D-fructose 6-phosphate: step 1/1. In terms of biological role, involved in amino sugar synthesis (formation of chitin, supplies the amino sugars of asparagine-linked oligosaccharides of glycoproteins). The sequence is that of Glutamine--fructose-6-phosphate aminotransferase [isomerizing] (GFA1) from Encephalitozoon cuniculi (strain GB-M1) (Microsporidian parasite).